We begin with the raw amino-acid sequence, 106 residues long: Small ribosomal subunit protein uS10 (106 aa).

The protein belongs to the universal ribosomal protein uS10 family. Part of the 30S ribosomal subunit.

Functionally, involved in the binding of tRNA to the ribosomes. The polypeptide is Small ribosomal subunit protein uS10 (Solibacter usitatus (strain Ellin6076)).